Reading from the N-terminus, the 178-residue chain is HTH-type transcriptional regulator SutR (178 aa).

The 55-residue stretch at 12–66 (LKQLRQQRGWSLSRLAEATGVSKAMLGQIERNESSPTVATLWKIATGLNVPFSTF) folds into the HTH cro/C1-type domain. A DNA-binding region (H-T-H motif) is located at residues 23-42 (LSRLAEATGVSKAMLGQIER). The 67-residue stretch at 105 to 171 (QMASGAISES…GGEQTVHFHS (67 aa)) folds into the Cupin type-2 domain.

Functionally, regulates the expression of 12-16 transcription units involved in various steps of sulfur utilization. Represses expression of pfkB, fliZ, cysE, ydcO and its own expression. Activates expression of ypfN. Acts by binding to SutR boxes. This chain is HTH-type transcriptional regulator SutR, found in Escherichia coli (strain K12).